A 268-amino-acid chain; its full sequence is Transcription initiation factor TFIID subunit 14b (268 aa).

A compositionally biased stretch (polar residues) spans 1–20; that stretch reads MTNSSSSKKQAQDQPETSEP. The segment at 1–36 is disordered; the sequence is MTNSSSSKKQAQDQPETSEPTLKSLKTKMTKSDEKQ. Residues 38–182 enclose the YEATS domain; that stretch reads KLKDIEISVP…ESFLARVQNH (145 aa). The stretch at 229–263 forms a coiled coil; the sequence is DELLQLAAARQQVQAHIAKLRRQISLLEGQNQTVK.

It belongs to the YAF9 family. In terms of assembly, component of the TFIID complex. TFIID is composed of TATA binding protein (TBP) and a number of TBP-associated factors (TAFs) whose MWs range from 14-217 kDa. Interacts with TAF1, TAF4B and TAF12B. Component of the SWR1 chromatin-remodeling complex. Interacts with FLX, a component of the transcription activator complex FRI-C. Interacts with SWC4, and with EAF1A and EAF1B (via HSA domain). In terms of tissue distribution, expressed in roots, leaves, inflorescence and flowering tissues.

The protein localises to the cytoplasm. It is found in the nucleus. In terms of biological role, negative regulator of flowering controlling the H4K5 acetylation levels in the FLC and FT chromatin. Positively regulates FLC expression. Component of the transcription factor IID (TFIID) complex that is essential for mediating regulation of RNA polymerase transcription. Component of the SWR1 complex which mediates the ATP-dependent exchange of histone H2A for the H2A variant HZT1 leading to transcriptional regulation of selected genes by chromatin remodeling. Component of a NuA4 histone acetyltransferase complex which is involved in transcriptional activation of selected genes principally by acetylation of nucleosomal histones H4 and H2A. The polypeptide is Transcription initiation factor TFIID subunit 14b (Arabidopsis thaliana (Mouse-ear cress)).